The following is a 567-amino-acid chain: Hexose transporter HXT9 (567 aa).

The span at 1-16 (MSGVNNTSANDLSTTE) shows a compositional bias: polar residues. Positions 1–45 (MSGVNNTSANDLSTTESNSNSVANAPSVKTEHNDSKNSLNLDATE) are disordered. Over 1 to 56 (MSGVNNTSANDLSTTESNSNSVANAPSVKTEHNDSKNSLNLDATEPPIDLPQKPLS) the chain is Cytoplasmic. A compositionally biased stretch (low complexity) spans 17-28 (SNSNSVANAPSV). Residues 57-77 (AYTTVAILCLMIAFGGFIFGW) form a helical membrane-spanning segment. Over 78–112 (DTGTISGFVNLSDFIRRFGQKNDKGTYYLSKVRMG) the chain is Extracellular. Asparagine 87 carries N-linked (GlcNAc...) asparagine glycosylation. A helical membrane pass occupies residues 113-133 (LIVSIFNIGCAIGGIVLSKVG). Over 134-139 (DIYGRR) the chain is Cytoplasmic. The chain crosses the membrane as a helical span at residues 140-160 (IGLITVTAIYVVGILIQITSI). The Extracellular portion of the chain corresponds to 161-170 (NKWYQYFIGR). A helical transmembrane segment spans residues 171–191 (IISGLGVGGIAVLSPMLISEV). Over 192 to 197 (APKQIR) the chain is Cytoplasmic. The chain crosses the membrane as a helical span at residues 198-218 (GTLVQLYQLMCTMGIFLGYCT). Residues 219–232 (NYGTKNYHNATQWR) lie on the Extracellular side of the membrane. N-linked (GlcNAc...) asparagine glycosylation is present at asparagine 227. Residues 233-253 (VGLGLCFAWTTFMVSGMMFVP) traverse the membrane as a helical segment. Residues 254 to 336 (ESPRYLIEVG…IQSLQQLTGD (83 aa)) lie on the Cytoplasmic side of the membrane. Residues 337-353 (NYFFYYGTTIFKSVGLK) traverse the membrane as a helical segment. The Extracellular portion of the chain corresponds to 354–359 (DSFQTS). Residues 360–377 (IIIGVVNFFSSFIAVYTI) form a helical membrane-spanning segment. The Cytoplasmic segment spans residues 378-384 (ERFGRRT). Residues 385–405 (CLLWGAASMLCCFAVFASVGV) form a helical membrane-spanning segment. Residues 406–429 (TKLWPQGSSHQDITSQGAGNCMIV) lie on the Extracellular side of the membrane. The helical transmembrane segment at 430–450 (FTMFFIFSFATTWAGGCYVIV) threads the bilayer. The Cytoplasmic portion of the chain corresponds to 451–467 (SETFPLRVKSRGMAIAT). The helical transmembrane segment at 468-488 (AANWMWGFLISFFTPFITGAI) threads the bilayer. A topological domain (extracellular) is located at residue asparagine 489. A helical transmembrane segment spans residues 490 to 510 (FYYGYVFLGCLVFAYFYVFFF). The Cytoplasmic segment spans residues 511–567 (VPETKGLTLEEVNTMWLEGVPAWKSASWVPPERRTADYDADAIDHDDRPIYKRFFSS).

Belongs to the major facilitator superfamily. Sugar transporter (TC 2.A.1.1) family.

It is found in the membrane. In terms of biological role, probable glucose transporter. In Saccharomyces cerevisiae (strain ATCC 204508 / S288c) (Baker's yeast), this protein is Hexose transporter HXT9 (HXT9).